The primary structure comprises 90 residues: UPF0298 protein SSU05_1549 (90 aa).

The protein belongs to the UPF0298 family.

Its subcellular location is the cytoplasm. The polypeptide is UPF0298 protein SSU05_1549 (Streptococcus suis (strain 05ZYH33)).